A 199-amino-acid polypeptide reads, in one-letter code: Holliday junction branch migration complex subunit RuvA (199 aa).

The domain I stretch occupies residues 1-63 (MIAYIEGKLA…EDAHTLFGFA (63 aa)). The domain II stretch occupies residues 64-142 (DLMEKEMFLH…KDALLAGSDS (79 aa)). Positions 143–151 (KQNFSVSHN) are flexible linker. The interval 151–199 (NSIRSEALTALITLGFTKTVAEKNLDLILKGNSNSFTLEDLIKQALKMS) is domain III.

It belongs to the RuvA family. As to quaternary structure, homotetramer. Forms an RuvA(8)-RuvB(12)-Holliday junction (HJ) complex. HJ DNA is sandwiched between 2 RuvA tetramers; dsDNA enters through RuvA and exits via RuvB. An RuvB hexamer assembles on each DNA strand where it exits the tetramer. Each RuvB hexamer is contacted by two RuvA subunits (via domain III) on 2 adjacent RuvB subunits; this complex drives branch migration. In the full resolvosome a probable DNA-RuvA(4)-RuvB(12)-RuvC(2) complex forms which resolves the HJ.

Its subcellular location is the cytoplasm. Its function is as follows. The RuvA-RuvB-RuvC complex processes Holliday junction (HJ) DNA during genetic recombination and DNA repair, while the RuvA-RuvB complex plays an important role in the rescue of blocked DNA replication forks via replication fork reversal (RFR). RuvA specifically binds to HJ cruciform DNA, conferring on it an open structure. The RuvB hexamer acts as an ATP-dependent pump, pulling dsDNA into and through the RuvAB complex. HJ branch migration allows RuvC to scan DNA until it finds its consensus sequence, where it cleaves and resolves the cruciform DNA. The polypeptide is Holliday junction branch migration complex subunit RuvA (Cytophaga hutchinsonii (strain ATCC 33406 / DSM 1761 / CIP 103989 / NBRC 15051 / NCIMB 9469 / D465)).